The following is a 103-amino-acid chain: Large ribosomal subunit protein uL24 (103 aa).

This sequence belongs to the universal ribosomal protein uL24 family. Part of the 50S ribosomal subunit.

One of two assembly initiator proteins, it binds directly to the 5'-end of the 23S rRNA, where it nucleates assembly of the 50S subunit. Its function is as follows. One of the proteins that surrounds the polypeptide exit tunnel on the outside of the subunit. This is Large ribosomal subunit protein uL24 from Enterococcus faecalis (strain ATCC 700802 / V583).